An 89-amino-acid chain; its full sequence is Protein PerC (89 aa).

Transcriptional activator of eaeA/bfpA expression in enteropathogenic E.coli. The chain is Protein PerC (perC) from Escherichia coli O111:H-.